Reading from the N-terminus, the 922-residue chain is Coronin-7 (922 aa).

4 WD repeats span residues 75-115 (CHSD…EALP), 124-163 (PEEL…PLTE), 166-205 (AHKD…QASQ), and 209-253 (AHEN…SALA). Residues 419–467 (DTDLSEGFSSPSSLMSPSTPSSLGPSLSSTSGIGTSPSQRSLQSLLGPS) are disordered. Positions 427–456 (SSPSSLMSPSTPSSLGPSLSSTSGIGTSPS) are enriched in low complexity. A phosphoserine mark is found at serine 459 and serine 462. Lysine 469 participates in a covalent cross-link: Glycyl lysine isopeptide (Lys-Gly) (interchain with G-Cter in ubiquitin). 4 WD repeats span residues 539 to 581 (QNGT…NVLT), 589 to 629 (GHTE…ERLK), 632 to 671 (GHQD…LPLQ), and 725 to 765 (DVAP…PFFL). The interval 858–922 (GMTPVSQAPR…FEGVDEDEWD (65 aa)) is disordered. Positions 881 to 893 (LEEKSDQQKKEEL) are enriched in basic and acidic residues. Serine 912 carries the phosphoserine modification.

This sequence belongs to the WD repeat coronin family. As to quaternary structure, interacts with clathrin adapter AP1 complex. This interaction takes place at Golgi membranes and not AP1-positive endosomal membranes. Interacts (when ubiquitinated at Lys-469) with EPS15. The membrane-associated form is phosphorylated on tyrosine residues. In terms of processing, ubiquitinated via 'Lys-33'-linked ubiquitin chains by the BCR(KLHL20) E3 ubiquitin ligase complex: 'Lys-33'-linked ubiquitination promotes interaction with EPS15 and facilitates actin polymerization at the trans-Golgi network, thereby facilitating post-Golgi trafficking. Deubiquitinated by ZRANB1/TRABID. In the adult, widely expressed with highest levels in brain, thymus and kidney and low levels in skeletal and heart muscle. Not expressed in lung. In the eye, strongly expressed in the outer plexiform layer of the retina. In the intestine, expressed both in terminally differentiated epithelial cells and in crypt epithelium. In the embryo, strongest expression is seen in brain, thymus, intestine, apical epidermal layers of the skin and developing lens fibers of the eye.

The protein localises to the golgi apparatus membrane. Its subcellular location is the golgi apparatus. It is found in the trans-Golgi network. It localises to the cytoplasmic vesicle. The protein resides in the cytoplasm. The protein localises to the cytosol. F-actin regulator involved in anterograde Golgi to endosome transport: upon ubiquitination via 'Lys-33'-linked ubiquitin chains by the BCR(KLHL20) E3 ubiquitin ligase complex, interacts with EPS15 and localizes to the trans-Golgi network, where it promotes actin polymerization, thereby facilitating post-Golgi trafficking. May play a role in the maintenance of the Golgi apparatus morphology. The sequence is that of Coronin-7 (Coro7) from Mus musculus (Mouse).